The following is a 258-amino-acid chain: Imidazole glycerol phosphate synthase subunit HisF (258 aa).

Active-site residues include D11 and D130.

It belongs to the HisA/HisF family. As to quaternary structure, heterodimer of HisH and HisF.

It is found in the cytoplasm. The catalysed reaction is 5-[(5-phospho-1-deoxy-D-ribulos-1-ylimino)methylamino]-1-(5-phospho-beta-D-ribosyl)imidazole-4-carboxamide + L-glutamine = D-erythro-1-(imidazol-4-yl)glycerol 3-phosphate + 5-amino-1-(5-phospho-beta-D-ribosyl)imidazole-4-carboxamide + L-glutamate + H(+). It participates in amino-acid biosynthesis; L-histidine biosynthesis; L-histidine from 5-phospho-alpha-D-ribose 1-diphosphate: step 5/9. IGPS catalyzes the conversion of PRFAR and glutamine to IGP, AICAR and glutamate. The HisF subunit catalyzes the cyclization activity that produces IGP and AICAR from PRFAR using the ammonia provided by the HisH subunit. The protein is Imidazole glycerol phosphate synthase subunit HisF of Yersinia pseudotuberculosis serotype O:1b (strain IP 31758).